Reading from the N-terminus, the 522-residue chain is Perilipin-1 (522 aa).

The residue at position 81 (serine 81) is a Phosphoserine. Position 85 is a phosphothreonine (threonine 85). 5 positions are modified to phosphoserine: serine 126, serine 130, serine 132, serine 137, and serine 174. 2 disordered regions span residues 195–217 (DKEE…AKPS) and 287–318 (LAAA…EENK). The span at 291-314 (QEEDHEDQTDTEGEDTEEEEELET) shows a compositional bias: acidic residues. The segment at 291 to 319 (QEEDHEDQTDTEGEDTEEEEELETEENKF) is required for interaction with CIDEC. Residues threonine 299 and threonine 301 each carry the phosphothreonine modification. Phosphoserine is present on residues serine 382, serine 384, and serine 408. A disordered region spans residues 413–522 (ESEFRDIDNP…THYSQLRKKS (110 aa)). The segment covering 414–435 (SEFRDIDNPPAEVERREAERRA) has biased composition (basic and acidic residues). Residues serine 436, serine 497, and serine 499 each carry the phosphoserine modification.

The protein belongs to the perilipin family. As to quaternary structure, interacts with ABHD5. Interacts with CIDEC. Interacts with AQP7. Post-translationally, major cAMP-dependent protein kinase-substrate in adipocytes, also dephosphorylated by PP1. When phosphorylated, may be maximally sensitive to HSL and when unphosphorylated, may play a role in the inhibition of lipolysis, by acting as a barrier in lipid droplet. In terms of tissue distribution, detected in adipocytes from white adipose tissue (at protein level). Detected in visceral adipose tissue and mammary gland.

Its subcellular location is the endoplasmic reticulum. The protein localises to the lipid droplet. In terms of biological role, modulator of adipocyte lipid metabolism. Coats lipid storage droplets to protect them from breakdown by hormone-sensitive lipase (HSL). Its absence may result in leanness. Plays a role in unilocular lipid droplet formation by activating CIDEC. Their interaction promotes lipid droplet enlargement and directional net neutral lipid transfer. May modulate lipolysis and triglyceride levels. The sequence is that of Perilipin-1 (PLIN1) from Homo sapiens (Human).